The chain runs to 98 residues: Co-chaperonin GroES (98 aa).

Belongs to the GroES chaperonin family. As to quaternary structure, heptamer of 7 subunits arranged in a ring. Interacts with the chaperonin GroEL.

It localises to the cytoplasm. Together with the chaperonin GroEL, plays an essential role in assisting protein folding. The GroEL-GroES system forms a nano-cage that allows encapsulation of the non-native substrate proteins and provides a physical environment optimized to promote and accelerate protein folding. GroES binds to the apical surface of the GroEL ring, thereby capping the opening of the GroEL channel. The protein is Co-chaperonin GroES of Rhizobium leguminosarum bv. trifolii (strain WSM2304).